A 175-amino-acid chain; its full sequence is Small ribosomal subunit protein uS9 (175 aa).

Belongs to the universal ribosomal protein uS9 family.

This is Small ribosomal subunit protein uS9 from Streptomyces griseus subsp. griseus (strain JCM 4626 / CBS 651.72 / NBRC 13350 / KCC S-0626 / ISP 5235).